The chain runs to 152 residues: Transcriptional regulator MraZ (152 aa).

SpoVT-AbrB domains lie at 5–52 (ATLV…PLPE) and 81–124 (ASEC…DEQT).

The protein belongs to the MraZ family. Forms oligomers.

Its subcellular location is the cytoplasm. It is found in the nucleoid. Its function is as follows. Negatively regulates its own expression and that of the subsequent genes in the proximal part of the division and cell wall (dcw) gene cluster. Acts by binding directly to DNA. May also regulate the expression of genes outside the dcw cluster. The protein is Transcriptional regulator MraZ of Erwinia tasmaniensis (strain DSM 17950 / CFBP 7177 / CIP 109463 / NCPPB 4357 / Et1/99).